The chain runs to 177 residues: Large ribosomal subunit protein uL6 (177 aa).

Residues 155–177 (EPYKGKGVKHADERIFRKEGKKK) are disordered.

The protein belongs to the universal ribosomal protein uL6 family. As to quaternary structure, part of the 50S ribosomal subunit.

In terms of biological role, this protein binds to the 23S rRNA, and is important in its secondary structure. It is located near the subunit interface in the base of the L7/L12 stalk, and near the tRNA binding site of the peptidyltransferase center. In Bartonella tribocorum (strain CIP 105476 / IBS 506), this protein is Large ribosomal subunit protein uL6.